The following is a 215-amino-acid chain: Pyridoxine/pyridoxamine 5'-phosphate oxidase (215 aa).

Substrate-binding positions include 9-12 (RRDY) and lysine 69. Residues 64–69 (RVLLLK), 79–80 (FT), lysine 86, and glutamine 108 each bind FMN. Tyrosine 126, arginine 130, and serine 134 together coordinate substrate. FMN is bound by residues 143–144 (QS) and tryptophan 188. Position 194-196 (194-196 (RLH)) interacts with substrate. Arginine 198 contacts FMN.

This sequence belongs to the pyridoxamine 5'-phosphate oxidase family. In terms of assembly, homodimer. FMN is required as a cofactor.

It carries out the reaction pyridoxamine 5'-phosphate + O2 + H2O = pyridoxal 5'-phosphate + H2O2 + NH4(+). The catalysed reaction is pyridoxine 5'-phosphate + O2 = pyridoxal 5'-phosphate + H2O2. It functions in the pathway cofactor metabolism; pyridoxal 5'-phosphate salvage; pyridoxal 5'-phosphate from pyridoxamine 5'-phosphate: step 1/1. The protein operates within cofactor metabolism; pyridoxal 5'-phosphate salvage; pyridoxal 5'-phosphate from pyridoxine 5'-phosphate: step 1/1. Functionally, catalyzes the oxidation of either pyridoxine 5'-phosphate (PNP) or pyridoxamine 5'-phosphate (PMP) into pyridoxal 5'-phosphate (PLP). This is Pyridoxine/pyridoxamine 5'-phosphate oxidase from Pseudomonas savastanoi pv. phaseolicola (strain 1448A / Race 6) (Pseudomonas syringae pv. phaseolicola (strain 1448A / Race 6)).